The sequence spans 319 residues: Acetyl-coenzyme A carboxylase carboxyl transferase subunit alpha (319 aa).

A CoA carboxyltransferase C-terminal domain is found at 35-296; sequence NIDEEVHRLR…KAQLLTDLAD (262 aa).

This sequence belongs to the AccA family. Acetyl-CoA carboxylase is a heterohexamer composed of biotin carboxyl carrier protein (AccB), biotin carboxylase (AccC) and two subunits each of ACCase subunit alpha (AccA) and ACCase subunit beta (AccD).

Its subcellular location is the cytoplasm. The enzyme catalyses N(6)-carboxybiotinyl-L-lysyl-[protein] + acetyl-CoA = N(6)-biotinyl-L-lysyl-[protein] + malonyl-CoA. Its pathway is lipid metabolism; malonyl-CoA biosynthesis; malonyl-CoA from acetyl-CoA: step 1/1. Functionally, component of the acetyl coenzyme A carboxylase (ACC) complex. First, biotin carboxylase catalyzes the carboxylation of biotin on its carrier protein (BCCP) and then the CO(2) group is transferred by the carboxyltransferase to acetyl-CoA to form malonyl-CoA. The polypeptide is Acetyl-coenzyme A carboxylase carboxyl transferase subunit alpha (Escherichia coli O45:K1 (strain S88 / ExPEC)).